The following is a 913-amino-acid chain: Rab GTPase-activating protein tbc-8 (913 aa).

The disordered stretch occupies residues 1 to 24; that stretch reads MQMFRHSSADMWRAKKPTLERRST. One can recognise an RUN domain in the interval 106-240; it reads NLNSPYVTSL…TYRRMSNRIE (135 aa). One can recognise a Rab-GAP TBC domain in the interval 597–844; that stretch reads INTKEVRRMA…KVWEVIWAAQ (248 aa).

The protein belongs to the RUTBC family. In terms of assembly, interacts with rab-19. Interacts with ric-19; the interaction is direct and may be required for the activation of rab-2 and dense vesicle maturation in cholinergic motoneurons. Interacts (via RUN domain) with rund-1. Does not interact with unc-108 (GTP-bound form). As to expression, expressed in neurons in the head, tail and ventral nerve cord (at protein level).

Its subcellular location is the golgi apparatus. The protein resides in the trans-Golgi network. It localises to the early endosome. The protein localises to the cytoplasmic vesicle membrane. In terms of biological role, interacts with numerous Rab family members, functioning as Rab effector for some, and as GTPase activator for others. GTPase activator for rab-2. In association with ric-19 activates rab-2 during dense core vesicle maturation in cholinergic motoneurons. The sequence is that of Rab GTPase-activating protein tbc-8 from Caenorhabditis elegans.